The sequence spans 785 residues: Endonuclease MutS2 (785 aa).

335–342 (GPNTGGKT) contributes to the ATP binding site. A Smr domain is found at 710–785 (LDLRGERYED…GNGVTIVEFK (76 aa)).

This sequence belongs to the DNA mismatch repair MutS family. MutS2 subfamily. Homodimer. Binds to stalled ribosomes, contacting rRNA.

Endonuclease that is involved in the suppression of homologous recombination and thus may have a key role in the control of bacterial genetic diversity. Functionally, acts as a ribosome collision sensor, splitting the ribosome into its 2 subunits. Detects stalled/collided 70S ribosomes which it binds and splits by an ATP-hydrolysis driven conformational change. Acts upstream of the ribosome quality control system (RQC), a ribosome-associated complex that mediates the extraction of incompletely synthesized nascent chains from stalled ribosomes and their subsequent degradation. Probably generates substrates for RQC. The chain is Endonuclease MutS2 from Listeria monocytogenes serovar 1/2a (strain ATCC BAA-679 / EGD-e).